The chain runs to 225 residues: Reticulon-like protein B9 (225 aa).

The 186-residue stretch at 39–224 (VADILLWREP…PRGTVKNKKF (186 aa)) folds into the Reticulon domain. The next 3 membrane-spanning stretches (helical) occupy residues 50-70 (IAAT…VVEY), 72-92 (FITL…IWST), and 152-172 (YIVS…IGFV).

The protein localises to the endoplasmic reticulum membrane. The sequence is that of Reticulon-like protein B9 (RTNLB9) from Arabidopsis thaliana (Mouse-ear cress).